Consider the following 456-residue polypeptide: UDP-N-acetylmuramoylalanine--D-glutamate ligase (456 aa).

Residue 119 to 125 coordinates ATP; it reads GSNGKTT.

The protein belongs to the MurCDEF family.

The protein resides in the cytoplasm. It catalyses the reaction UDP-N-acetyl-alpha-D-muramoyl-L-alanine + D-glutamate + ATP = UDP-N-acetyl-alpha-D-muramoyl-L-alanyl-D-glutamate + ADP + phosphate + H(+). The protein operates within cell wall biogenesis; peptidoglycan biosynthesis. In terms of biological role, cell wall formation. Catalyzes the addition of glutamate to the nucleotide precursor UDP-N-acetylmuramoyl-L-alanine (UMA). In Limosilactobacillus reuteri (strain DSM 20016) (Lactobacillus reuteri), this protein is UDP-N-acetylmuramoylalanine--D-glutamate ligase.